A 215-amino-acid polypeptide reads, in one-letter code: Eukaryotic translation initiation factor 4E-1A (215 aa).

Residues 1-14 (MATAEPETSTNPSN) are compositionally biased toward low complexity. The segment at 1 to 23 (MATAEPETSTNPSNSEEKNEENE) is disordered. MRNA contacts are provided by residues 54–55 (WQ), 100–101 (WE), 155–160 (RTKGDK), and 203–205 (TKS).

Belongs to the eukaryotic initiation factor 4E family. In terms of assembly, interacts with eif4ebp3l. In terms of tissue distribution, expressed in all tissues examined, including gill, fin, heart, intestine, muscle, ovary and testis.

It is found in the cytoplasm. The protein resides in the nucleus. In terms of biological role, recognizes and binds the 7-methylguanosine (m7G)-containing mRNA cap during an early step in the initiation of protein synthesis and facilitates ribosome binding by inducing the unwinding of the mRNAs secondary structures. Also promotes export of a subset of mRNAs from the nucleus to the cytoplasm. In Danio rerio (Zebrafish), this protein is Eukaryotic translation initiation factor 4E-1A.